Here is a 337-residue protein sequence, read N- to C-terminus: Pseudouridine-5'-phosphate glycosidase (337 aa).

Glutamate 26 functions as the Proton donor in the catalytic mechanism. Residues lysine 87 and valine 107 each contribute to the substrate site. Mn(2+) is bound at residue aspartate 139. Residue serine 141–aspartate 143 coordinates substrate. Catalysis depends on lysine 160, which acts as the Nucleophile. Positions serine 306 to arginine 325 are enriched in low complexity. Positions serine 306–tryptophan 337 are disordered.

It belongs to the pseudouridine-5'-phosphate glycosidase family. Homotrimer. Mn(2+) is required as a cofactor.

The enzyme catalyses D-ribose 5-phosphate + uracil = psi-UMP + H2O. Its function is as follows. Catalyzes the reversible cleavage of pseudouridine 5'-phosphate (PsiMP) to ribose 5-phosphate and uracil. Functions biologically in the cleavage direction, as part of a pseudouridine degradation pathway. The sequence is that of Pseudouridine-5'-phosphate glycosidase from Methylobacterium nodulans (strain LMG 21967 / CNCM I-2342 / ORS 2060).